A 144-amino-acid chain; its full sequence is 3-dehydroquinate dehydratase (144 aa).

Y22 functions as the Proton acceptor in the catalytic mechanism. The substrate site is built by N73, H79, and D86. H99 (proton donor) is an active-site residue. Substrate-binding positions include 100-101 (IS) and R110.

This sequence belongs to the type-II 3-dehydroquinase family. Homododecamer.

It carries out the reaction 3-dehydroquinate = 3-dehydroshikimate + H2O. Its pathway is metabolic intermediate biosynthesis; chorismate biosynthesis; chorismate from D-erythrose 4-phosphate and phosphoenolpyruvate: step 3/7. Catalyzes a trans-dehydration via an enolate intermediate. In Clostridium acetobutylicum (strain ATCC 824 / DSM 792 / JCM 1419 / IAM 19013 / LMG 5710 / NBRC 13948 / NRRL B-527 / VKM B-1787 / 2291 / W), this protein is 3-dehydroquinate dehydratase.